A 309-amino-acid chain; its full sequence is MITFLPIIFSILIVVTFVIGNFANGFIALANSIEWFKRQKISFADQILTALAVSRVGLLWVLLLNWYATELNPAFYSIEVRITAYNVWAVISHFSNWLATSLSIFYLLKIANFSNLIFLRLKRRVKSVVLVILLGPLLFLVCHLFVINMNQIIWTKEYEGNMTWKIKLRSAMYLSDTTVTILANLVPFTLTLISFLLLICSLCKHLKKMQLHGKGSQDPSMKVHIKALQTVTSFLLLCAIYFLSVIMSVWSFESLENKPVFMFCEAITFSYPSTHPFILIWGNKKLKQTFLSVLWHVRYWVKGEKPSSS.

Met1 is a topological domain (extracellular). Residues 2–22 (ITFLPIIFSILIVVTFVIGNF) form a helical membrane-spanning segment. Topologically, residues 23–46 (ANGFIALANSIEWFKRQKISFADQ) are cytoplasmic. A helical membrane pass occupies residues 47 to 67 (ILTALAVSRVGLLWVLLLNWY). At 68–86 (ATELNPAFYSIEVRITAYN) the chain is on the extracellular side. Residues 87-107 (VWAVISHFSNWLATSLSIFYL) traverse the membrane as a helical segment. Over 108–126 (LKIANFSNLIFLRLKRRVK) the chain is Cytoplasmic. A helical transmembrane segment spans residues 127–147 (SVVLVILLGPLLFLVCHLFVI). The Extracellular portion of the chain corresponds to 148 to 178 (NMNQIIWTKEYEGNMTWKIKLRSAMYLSDTT). Residue Asn161 is glycosylated (N-linked (GlcNAc...) asparagine). Residues 179–199 (VTILANLVPFTLTLISFLLLI) traverse the membrane as a helical segment. At 200 to 229 (CSLCKHLKKMQLHGKGSQDPSMKVHIKALQ) the chain is on the cytoplasmic side. A helical transmembrane segment spans residues 230-250 (TVTSFLLLCAIYFLSVIMSVW). Topologically, residues 251–259 (SFESLENKP) are extracellular. A helical transmembrane segment spans residues 260-280 (VFMFCEAITFSYPSTHPFILI). Topologically, residues 281–309 (WGNKKLKQTFLSVLWHVRYWVKGEKPSSS) are cytoplasmic.

Belongs to the G-protein coupled receptor T2R family.

The protein resides in the membrane. Its subcellular location is the cell projection. It is found in the cilium membrane. Receptor that may play a role in the perception of bitterness and is gustducin-linked. May play a role in sensing the chemical composition of the gastrointestinal content. The activity of this receptor may stimulate alpha gustducin, mediate PLC-beta-2 activation and lead to the gating of TRPM5. In airway epithelial cells, binding of bitter compounds increases the intracellular calcium ion concentration and stimulates ciliary beat frequency. This chain is Taste receptor type 2 member 46 (TAS2R46), found in Gorilla gorilla gorilla (Western lowland gorilla).